The chain runs to 239 residues: Orotidine 5'-phosphate decarboxylase (239 aa).

Substrate contacts are provided by residues Asp-11, Lys-33, 60–69, Thr-123, Arg-185, Gln-194, Gly-214, and Arg-215; that span reads DLKCHDIPTT. Residue Lys-62 is the Proton donor of the active site.

Belongs to the OMP decarboxylase family. Type 1 subfamily. In terms of assembly, homodimer.

The catalysed reaction is orotidine 5'-phosphate + H(+) = UMP + CO2. It functions in the pathway pyrimidine metabolism; UMP biosynthesis via de novo pathway; UMP from orotate: step 2/2. Functionally, catalyzes the decarboxylation of orotidine 5'-monophosphate (OMP) to uridine 5'-monophosphate (UMP). This chain is Orotidine 5'-phosphate decarboxylase, found in Bacillus licheniformis (strain ATCC 14580 / DSM 13 / JCM 2505 / CCUG 7422 / NBRC 12200 / NCIMB 9375 / NCTC 10341 / NRRL NRS-1264 / Gibson 46).